The sequence spans 262 residues: Adenosylcobinamide-GDP ribazoletransferase (262 aa).

The next 6 helical transmembrane spans lie at 43 to 63, 66 to 86, 120 to 140, 146 to 166, 191 to 211, and 242 to 262; these read YFGL…WLTQ, LPAG…TGGF, GAIA…ELAL, AGSA…SIIF, LFIL…LAAL, and AAQQ…GSIL.

This sequence belongs to the CobS family. Mg(2+) serves as cofactor.

The protein localises to the cell inner membrane. The catalysed reaction is alpha-ribazole + adenosylcob(III)inamide-GDP = adenosylcob(III)alamin + GMP + H(+). The enzyme catalyses alpha-ribazole 5'-phosphate + adenosylcob(III)inamide-GDP = adenosylcob(III)alamin 5'-phosphate + GMP + H(+). It functions in the pathway cofactor biosynthesis; adenosylcobalamin biosynthesis; adenosylcobalamin from cob(II)yrinate a,c-diamide: step 7/7. Joins adenosylcobinamide-GDP and alpha-ribazole to generate adenosylcobalamin (Ado-cobalamin). Also synthesizes adenosylcobalamin 5'-phosphate from adenosylcobinamide-GDP and alpha-ribazole 5'-phosphate. The polypeptide is Adenosylcobinamide-GDP ribazoletransferase (Shewanella putrefaciens (strain CN-32 / ATCC BAA-453)).